Consider the following 586-residue polypeptide: Mitogen-activated protein kinase 15 (586 aa).

Residues 14-305 (YDIKKRLGKG…AEEALEHPYV (292 aa)) form the Protein kinase domain. ATP contacts are provided by residues 20–28 (LGKGAYGIV) and K43. D138 (proton acceptor) is an active-site residue. Disordered regions lie at residues 354–506 (QKRE…DAPP) and 520–539 (NQRT…RFGR). A compositionally biased stretch (pro residues) spans 382-393 (PAPPAGTNPAPQ). A compositionally biased stretch (low complexity) spans 400–414 (PQRAAIAAPNQPPAQ). Over residues 415-439 (KDSTQQSPKIKAPSSNPITHSTTHG) the composition is skewed to polar residues. Over residues 452–463 (AGQQGAAGTTAQ) the composition is skewed to low complexity. Positions 464-473 (EVRKEVESRS) are enriched in basic and acidic residues. Polar residues predominate over residues 484–498 (FSHSQQARAAATNSA).

Interacts with dvl2.

It localises to the cytoplasm. Its subcellular location is the cytoskeleton. The protein resides in the cilium basal body. It is found in the cell projection. The protein localises to the cilium. It localises to the cell junction. It carries out the reaction L-seryl-[protein] + ATP = O-phospho-L-seryl-[protein] + ADP + H(+). It catalyses the reaction L-threonyl-[protein] + ATP = O-phospho-L-threonyl-[protein] + ADP + H(+). Its function is as follows. Atypical MAPK protein that regulates ciliogenesis by phosphorylating rcsd1 through its binding with dvl2. This chain is Mitogen-activated protein kinase 15, found in Xenopus laevis (African clawed frog).